We begin with the raw amino-acid sequence, 178 residues long: Dual-action ribosomal maturation protein DarP (178 aa).

The protein belongs to the DarP family.

Its subcellular location is the cytoplasm. Member of a network of 50S ribosomal subunit biogenesis factors which assembles along the 30S-50S interface, preventing incorrect 23S rRNA structures from forming. Promotes peptidyl transferase center (PTC) maturation. This is Dual-action ribosomal maturation protein DarP from Mannheimia succiniciproducens (strain KCTC 0769BP / MBEL55E).